Reading from the N-terminus, the 79-residue chain is uncharacterized protein (79 aa).

The N-terminal stretch at 1-18 (MQIKNIVAVLATVTAINA) is a signal peptide. The interval 24–44 (PNATTPNATQPNATQPNTTLP) is disordered. N-linked (GlcNAc...) asparagine glycosylation is found at asparagine 25, asparagine 30, asparagine 35, and asparagine 40. Glycine 55 carries GPI-anchor amidated glycine lipidation. Residues 56 to 79 (EAVVNTMAAGAFGAAIAAGVAFLF) constitute a propeptide, removed in mature form.

It is found in the cell membrane. This is an uncharacterized protein from Saccharomyces cerevisiae (strain ATCC 204508 / S288c) (Baker's yeast).